Reading from the N-terminus, the 364-residue chain is tRNA 2-selenouridine synthase (364 aa).

Residues 14–137 (LLADTPLIDV…LRQTAIQATW (124 aa)) enclose the Rhodanese domain. Catalysis depends on cysteine 97, which acts as the S-selanylcysteine intermediate.

It belongs to the SelU family. Monomer.

It catalyses the reaction 5-methylaminomethyl-2-thiouridine(34) in tRNA + selenophosphate + (2E)-geranyl diphosphate + H2O + H(+) = 5-methylaminomethyl-2-selenouridine(34) in tRNA + (2E)-thiogeraniol + phosphate + diphosphate. It carries out the reaction 5-methylaminomethyl-2-thiouridine(34) in tRNA + (2E)-geranyl diphosphate = 5-methylaminomethyl-S-(2E)-geranyl-thiouridine(34) in tRNA + diphosphate. The enzyme catalyses 5-methylaminomethyl-S-(2E)-geranyl-thiouridine(34) in tRNA + selenophosphate + H(+) = 5-methylaminomethyl-2-(Se-phospho)selenouridine(34) in tRNA + (2E)-thiogeraniol. The catalysed reaction is 5-methylaminomethyl-2-(Se-phospho)selenouridine(34) in tRNA + H2O = 5-methylaminomethyl-2-selenouridine(34) in tRNA + phosphate. In terms of biological role, involved in the post-transcriptional modification of the uridine at the wobble position (U34) of tRNA(Lys), tRNA(Glu) and tRNA(Gln). Catalyzes the conversion of 2-thiouridine (S2U-RNA) to 2-selenouridine (Se2U-RNA). Acts in a two-step process involving geranylation of 2-thiouridine (S2U) to S-geranyl-2-thiouridine (geS2U) and subsequent selenation of the latter derivative to 2-selenouridine (Se2U) in the tRNA chain. The protein is tRNA 2-selenouridine synthase of Salmonella dublin (strain CT_02021853).